A 397-amino-acid polypeptide reads, in one-letter code: CCA-adding enzyme (397 aa).

Positions 26 and 29 each coordinate ATP. 2 residues coordinate CTP: Gly-26 and Arg-29. 2 residues coordinate Mg(2+): Asp-39 and Asp-41. ATP contacts are provided by Arg-110, Asp-153, Arg-156, Arg-159, and Arg-162. Arg-110, Asp-153, Arg-156, Arg-159, and Arg-162 together coordinate CTP.

This sequence belongs to the tRNA nucleotidyltransferase/poly(A) polymerase family. Bacterial CCA-adding enzyme type 3 subfamily. Homodimer. Mg(2+) is required as a cofactor.

The enzyme catalyses a tRNA precursor + 2 CTP + ATP = a tRNA with a 3' CCA end + 3 diphosphate. The catalysed reaction is a tRNA with a 3' CCA end + 2 CTP + ATP = a tRNA with a 3' CCACCA end + 3 diphosphate. Catalyzes the addition and repair of the essential 3'-terminal CCA sequence in tRNAs without using a nucleic acid template. Adds these three nucleotides in the order of C, C, and A to the tRNA nucleotide-73, using CTP and ATP as substrates and producing inorganic pyrophosphate. tRNA 3'-terminal CCA addition is required both for tRNA processing and repair. Also involved in tRNA surveillance by mediating tandem CCA addition to generate a CCACCA at the 3' terminus of unstable tRNAs. While stable tRNAs receive only 3'-terminal CCA, unstable tRNAs are marked with CCACCA and rapidly degraded. This Bacillus thuringiensis subsp. konkukian (strain 97-27) protein is CCA-adding enzyme.